We begin with the raw amino-acid sequence, 275 residues long: Large ribosomal subunit protein uL2c (275 aa).

Disordered regions lie at residues 29–60 (PEKS…GHKR) and 225–252 (MNPV…PWGH). The segment covering 51–60 (SRHRGGGHKR) has biased composition (basic residues).

It belongs to the universal ribosomal protein uL2 family. Part of the 50S ribosomal subunit.

The protein localises to the plastid. Its subcellular location is the chloroplast. This chain is Large ribosomal subunit protein uL2c (rpl2), found in Chlorokybus atmophyticus (Soil alga).